The primary structure comprises 160 residues: Cytochrome b6-f complex subunit 4 (160 aa).

The next 3 membrane-spanning stretches (helical) occupy residues 36-56, 95-115, and 131-151; these read LLYM…SLAV, LLGV…PFIE, and TLFL…ALPI.

It belongs to the cytochrome b family. PetD subfamily. In terms of assembly, the 4 large subunits of the cytochrome b6-f complex are cytochrome b6, subunit IV (17 kDa polypeptide, petD), cytochrome f and the Rieske protein, while the 4 small subunits are petG, petL, petM and petN. The complex functions as a dimer.

The protein resides in the plastid. The protein localises to the chloroplast thylakoid membrane. Component of the cytochrome b6-f complex, which mediates electron transfer between photosystem II (PSII) and photosystem I (PSI), cyclic electron flow around PSI, and state transitions. The chain is Cytochrome b6-f complex subunit 4 from Oltmannsiellopsis viridis (Marine flagellate).